A 215-amino-acid polypeptide reads, in one-letter code: Adenylate kinase (215 aa).

An ATP-binding site is contributed by 10–15 (GAGKGT). The interval 30–59 (STGDMFRAAMKNNTELGKKAKSFMDNGDLV) is NMP. AMP contacts are provided by residues Thr-31, Arg-36, 57–59 (DLV), 85–88 (GFPR), and Gln-92. Residues 126-163 (GRWICRTCGKTYHEIYNPPKVPGKCDLDGGELYQRDDD) form an LID region. Residue Arg-127 participates in ATP binding. Zn(2+) is bound by residues Cys-130 and Cys-133. 136-137 (TY) is an ATP binding site. Residues Cys-150 and Asp-153 each contribute to the Zn(2+) site. AMP is bound by residues Arg-160 and Arg-171. Gln-199 provides a ligand contact to ATP.

It belongs to the adenylate kinase family. As to quaternary structure, monomer.

The protein resides in the cytoplasm. It catalyses the reaction AMP + ATP = 2 ADP. The protein operates within purine metabolism; AMP biosynthesis via salvage pathway; AMP from ADP: step 1/1. Functionally, catalyzes the reversible transfer of the terminal phosphate group between ATP and AMP. Plays an important role in cellular energy homeostasis and in adenine nucleotide metabolism. The polypeptide is Adenylate kinase (Listeria monocytogenes serotype 4b (strain CLIP80459)).